Here is a 298-residue protein sequence, read N- to C-terminus: Protein Bel-1 (298 aa).

A compositionally biased stretch (basic and acidic residues) spans 1–17 (MASWEKEKELAHLHQPE). A disordered region spans residues 1–46 (MASWEKEKELAHLHQPEDDPLPDLSLLLDMDQFEPTEGPDSNPGAE). The DNA-binding element occupies 91–200 (SKWACARLIL…GEPLKPRVRA (110 aa)). Positions 214-223 (ADRPKRSRWG) match the Nuclear localization signal motif. Positions 225–298 (APREQPNTSS…SGPPTGPSEN (74 aa)) are transactivation domain.

As to quaternary structure, homodimer or homomultimer. Forms complexes with the host nuclear factors NFIA, NFIB, NFIC or NFIX.

It localises to the host nucleus. Functionally, transcriptional transactivator that activates the viral internal promoter (IP), thereby enhancing its own expression. This transactivation is repressed by nuclear factor I. Also transactivates the long terminal repeat (LTR) promoter, thereby inducing structural gene expression, initiating the late phase of infection. It is therefore a key regulator of viral gene expression. It directly binds to and activates DNA target sites of viral promoters and those of distinct cellular genes. Required for viral replication. This is Protein Bel-1 (bel1) from Chlorocebus aethiops (Green monkey).